A 262-amino-acid polypeptide reads, in one-letter code: Type III pantothenate kinase (262 aa).

Asp-9 to Lys-16 provides a ligand contact to ATP. Substrate-binding positions include Tyr-103 and Gly-110 to Arg-113. Asp-112 functions as the Proton acceptor in the catalytic mechanism. Asp-134 provides a ligand contact to K(+). Residue Thr-137 coordinates ATP. Thr-190 is a substrate binding site.

Belongs to the type III pantothenate kinase family. In terms of assembly, homodimer. The cofactor is NH4(+). K(+) serves as cofactor.

The protein localises to the cytoplasm. It carries out the reaction (R)-pantothenate + ATP = (R)-4'-phosphopantothenate + ADP + H(+). Its pathway is cofactor biosynthesis; coenzyme A biosynthesis; CoA from (R)-pantothenate: step 1/5. Catalyzes the phosphorylation of pantothenate (Pan), the first step in CoA biosynthesis. The protein is Type III pantothenate kinase of Nitratidesulfovibrio vulgaris (strain DSM 19637 / Miyazaki F) (Desulfovibrio vulgaris).